The following is a 313-amino-acid chain: MSEVKTQIKPKAIFLMGPTASGKTALAIALRQKLPVDLISVDSALIYRGMDIGTAKPDETEQSLAPHRLIDILDPALPYSAADFRKDALKAMEEITAAGRIPLLVGGTMLYFKALLEGLSPLPSANPEIRAEIEKKAAEQGWEAIHQELASVDPVAAKRIHPNDPQRLSRALEVYLISGKSMTELTQISGEALPYDVYQFAIAPKDRNVLHQRIEARFKQMLTCGFEDEVKSLYQRGDLHEDLPSIRCVGYRQMWSYLSGEIDYDEMVYRGICATRQLAKRQITWLRGWHDVHWLDSEDFEQSLNTVLQVVSA.

17–24 contacts ATP; sequence GPTASGKT. Residue 19-24 participates in substrate binding; it reads TASGKT. Interaction with substrate tRNA regions lie at residues 42-45, 166-170, 247-252, and 280-287; these read DSAL, QRLSR, RCVGYR, and KRQITWLR.

The protein belongs to the IPP transferase family. As to quaternary structure, monomer. Requires Mg(2+) as cofactor.

It carries out the reaction adenosine(37) in tRNA + dimethylallyl diphosphate = N(6)-dimethylallyladenosine(37) in tRNA + diphosphate. Catalyzes the transfer of a dimethylallyl group onto the adenine at position 37 in tRNAs that read codons beginning with uridine, leading to the formation of N6-(dimethylallyl)adenosine (i(6)A). This Proteus mirabilis (strain HI4320) protein is tRNA dimethylallyltransferase.